A 234-amino-acid polypeptide reads, in one-letter code: Phosphoribosylformylglycinamidine synthase subunit PurQ (234 aa).

The Glutamine amidotransferase type-1 domain occupies 5–234 (TVGIVVFPGS…ESLFAHLAGA (230 aa)). Catalysis depends on cysteine 89, which acts as the Nucleophile. Active-site residues include histidine 206 and glutamate 208.

As to quaternary structure, part of the FGAM synthase complex composed of 1 PurL, 1 PurQ and 2 PurS subunits.

The protein localises to the cytoplasm. It carries out the reaction N(2)-formyl-N(1)-(5-phospho-beta-D-ribosyl)glycinamide + L-glutamine + ATP + H2O = 2-formamido-N(1)-(5-O-phospho-beta-D-ribosyl)acetamidine + L-glutamate + ADP + phosphate + H(+). The catalysed reaction is L-glutamine + H2O = L-glutamate + NH4(+). It participates in purine metabolism; IMP biosynthesis via de novo pathway; 5-amino-1-(5-phospho-D-ribosyl)imidazole from N(2)-formyl-N(1)-(5-phospho-D-ribosyl)glycinamide: step 1/2. Functionally, part of the phosphoribosylformylglycinamidine synthase complex involved in the purines biosynthetic pathway. Catalyzes the ATP-dependent conversion of formylglycinamide ribonucleotide (FGAR) and glutamine to yield formylglycinamidine ribonucleotide (FGAM) and glutamate. The FGAM synthase complex is composed of three subunits. PurQ produces an ammonia molecule by converting glutamine to glutamate. PurL transfers the ammonia molecule to FGAR to form FGAM in an ATP-dependent manner. PurS interacts with PurQ and PurL and is thought to assist in the transfer of the ammonia molecule from PurQ to PurL. This Chlorobaculum tepidum (strain ATCC 49652 / DSM 12025 / NBRC 103806 / TLS) (Chlorobium tepidum) protein is Phosphoribosylformylglycinamidine synthase subunit PurQ.